The primary structure comprises 371 residues: 3-dehydroquinate synthase (371 aa).

NAD(+) contacts are provided by residues 70 to 75 (DAEDGK), 104 to 108 (GAVTD), 128 to 129 (TT), K141, and K150. Zn(2+) contacts are provided by E183, H246, and H262.

Belongs to the sugar phosphate cyclases superfamily. Dehydroquinate synthase family. Co(2+) is required as a cofactor. The cofactor is Zn(2+). NAD(+) serves as cofactor.

It localises to the cytoplasm. The catalysed reaction is 7-phospho-2-dehydro-3-deoxy-D-arabino-heptonate = 3-dehydroquinate + phosphate. Its pathway is metabolic intermediate biosynthesis; chorismate biosynthesis; chorismate from D-erythrose 4-phosphate and phosphoenolpyruvate: step 2/7. Catalyzes the conversion of 3-deoxy-D-arabino-heptulosonate 7-phosphate (DAHP) to dehydroquinate (DHQ). This Saccharopolyspora erythraea (strain ATCC 11635 / DSM 40517 / JCM 4748 / NBRC 13426 / NCIMB 8594 / NRRL 2338) protein is 3-dehydroquinate synthase.